Here is a 252-residue protein sequence, read N- to C-terminus: Ribosomal RNA small subunit methyltransferase NEP1 (252 aa).

Residues L180, G207, 212-214 (GKD), and 227-232 (LSNYPL) contribute to the S-adenosyl-L-methionine site.

This sequence belongs to the class IV-like SAM-binding methyltransferase superfamily. RNA methyltransferase NEP1 family. Homodimer. Interacts with snoRNA U3. Interacts with NOP14 and MPP10. Component of the ribosomal small subunit (SSU) processome composed of at least 40 protein subunits and snoRNA U3.

It is found in the nucleus. It localises to the nucleolus. It catalyses the reaction pseudouridine(1191) in yeast 18S rRNA + S-adenosyl-L-methionine = N(1)-methylpseudouridine(1191) in yeast 18S rRNA + S-adenosyl-L-homocysteine + H(+). S-adenosyl-L-methionine-dependent pseudouridine N(1)-methyltransferase that methylates pseudouridine at position 1189 (Psi1189) in 18S rRNA. Involved the biosynthesis of the hypermodified N1-methyl-N3-(3-amino-3-carboxypropyl) pseudouridine (m1acp3-Psi) conserved in eukaryotic 18S rRNA. N1-methylation is independent on acp-modification at the N3-position of U1191. Also has an essential role in 40S ribosomal subunit biogenesis independent on its methyltransferase activity, facilitating the incorporation of ribosomal protein S19 (RPS19A/RPS19B) during the formation of pre-ribosomes. The sequence is that of Ribosomal RNA small subunit methyltransferase NEP1 from Saccharomyces cerevisiae (strain ATCC 204508 / S288c) (Baker's yeast).